A 474-amino-acid chain; its full sequence is ATP synthase subunit beta (474 aa).

151–158 provides a ligand contact to ATP; sequence GGAGVGKT.

This sequence belongs to the ATPase alpha/beta chains family. As to quaternary structure, F-type ATPases have 2 components, CF(1) - the catalytic core - and CF(0) - the membrane proton channel. CF(1) has five subunits: alpha(3), beta(3), gamma(1), delta(1), epsilon(1). CF(0) has four main subunits: a(1), b(1), b'(1) and c(9-12).

It localises to the cell inner membrane. It carries out the reaction ATP + H2O + 4 H(+)(in) = ADP + phosphate + 5 H(+)(out). Produces ATP from ADP in the presence of a proton gradient across the membrane. The catalytic sites are hosted primarily by the beta subunits. This chain is ATP synthase subunit beta, found in Roseobacter denitrificans (strain ATCC 33942 / OCh 114) (Erythrobacter sp. (strain OCh 114)).